Consider the following 194-residue polypeptide: RNA pyrophosphohydrolase (194 aa).

The Nudix hydrolase domain occupies 6 to 149 (GFRPNVGIIL…KRDVYQRALQ (144 aa)). Residues 38 to 59 (GGIKFGETPEQAMYRELEEEVG) carry the Nudix box motif. Positions 158 to 194 (PTQHVPPQHNTARYLRQTHASRKPDEPSTEKTKPDNE) are disordered. The segment covering 179–194 (RKPDEPSTEKTKPDNE) has biased composition (basic and acidic residues).

The protein belongs to the Nudix hydrolase family. RppH subfamily. Requires a divalent metal cation as cofactor.

Accelerates the degradation of transcripts by removing pyrophosphate from the 5'-end of triphosphorylated RNA, leading to a more labile monophosphorylated state that can stimulate subsequent ribonuclease cleavage. This is RNA pyrophosphohydrolase from Janthinobacterium sp. (strain Marseille) (Minibacterium massiliensis).